The following is a 92-amino-acid chain: Small ribosomal subunit protein uS19c (92 aa).

Belongs to the universal ribosomal protein uS19 family.

It is found in the plastid. Its subcellular location is the chloroplast. Its function is as follows. Protein S19 forms a complex with S13 that binds strongly to the 16S ribosomal RNA. In Lactuca sativa (Garden lettuce), this protein is Small ribosomal subunit protein uS19c.